Reading from the N-terminus, the 70-residue chain is Large ribosomal subunit protein uL29 (70 aa).

It belongs to the universal ribosomal protein uL29 family.

In Clostridium botulinum (strain ATCC 19397 / Type A), this protein is Large ribosomal subunit protein uL29.